A 206-amino-acid chain; its full sequence is Small ribosomal subunit protein uS4 (206 aa).

One can recognise an S4 RNA-binding domain in the interval 96–156 (TRLDNVVYRM…EKSRTQARIK (61 aa)).

It belongs to the universal ribosomal protein uS4 family. Part of the 30S ribosomal subunit. Contacts protein S5. The interaction surface between S4 and S5 is involved in control of translational fidelity.

Its function is as follows. One of the primary rRNA binding proteins, it binds directly to 16S rRNA where it nucleates assembly of the body of the 30S subunit. With S5 and S12 plays an important role in translational accuracy. The protein is Small ribosomal subunit protein uS4 of Shewanella halifaxensis (strain HAW-EB4).